The primary structure comprises 476 residues: Cysteine--tRNA ligase (476 aa).

Cysteine 29 is a Zn(2+) binding site. The 'HIGH' region motif lies at 31–41; the sequence is PTVYDYPHLGH. Residues cysteine 209, histidine 234, and glutamate 238 each contribute to the Zn(2+) site. The 'KMSKS' region signature appears at 266–270; that stretch reads KMSKS. ATP is bound at residue lysine 269.

Belongs to the class-I aminoacyl-tRNA synthetase family. The cofactor is Zn(2+).

It localises to the cytoplasm. The enzyme catalyses tRNA(Cys) + L-cysteine + ATP = L-cysteinyl-tRNA(Cys) + AMP + diphosphate. This chain is Cysteine--tRNA ligase, found in Thermococcus gammatolerans (strain DSM 15229 / JCM 11827 / EJ3).